A 124-amino-acid polypeptide reads, in one-letter code: Small ribosomal subunit protein uS12 (124 aa).

Asp-89 carries the post-translational modification 3-methylthioaspartic acid. Residues Ser-105–Ser-124 are disordered. Residues Gly-113–Ser-124 show a composition bias toward basic residues.

Belongs to the universal ribosomal protein uS12 family. In terms of assembly, part of the 30S ribosomal subunit. Contacts proteins S8 and S17. May interact with IF1 in the 30S initiation complex.

Functionally, with S4 and S5 plays an important role in translational accuracy. Its function is as follows. Interacts with and stabilizes bases of the 16S rRNA that are involved in tRNA selection in the A site and with the mRNA backbone. Located at the interface of the 30S and 50S subunits, it traverses the body of the 30S subunit contacting proteins on the other side and probably holding the rRNA structure together. The combined cluster of proteins S8, S12 and S17 appears to hold together the shoulder and platform of the 30S subunit. This chain is Small ribosomal subunit protein uS12, found in Colwellia psychrerythraea (strain 34H / ATCC BAA-681) (Vibrio psychroerythus).